The following is a 393-amino-acid chain: Phosphoglycerate kinase (393 aa).

Substrate-binding positions include 21-23 (DIN), Arg36, 59-62 (HFGR), Arg114, and Arg147. ATP-binding positions include Lys197, Glu319, and 349-352 (GGDT).

The protein belongs to the phosphoglycerate kinase family. As to quaternary structure, monomer.

It is found in the cytoplasm. The enzyme catalyses (2R)-3-phosphoglycerate + ATP = (2R)-3-phospho-glyceroyl phosphate + ADP. Its pathway is carbohydrate degradation; glycolysis; pyruvate from D-glyceraldehyde 3-phosphate: step 2/5. The polypeptide is Phosphoglycerate kinase (Dinoroseobacter shibae (strain DSM 16493 / NCIMB 14021 / DFL 12)).